The chain runs to 60 residues: Homeobox protein engrailed-like A (60 aa).

A DNA-binding region (homeobox) is located at residues 1-41; that stretch reads ADQLARLRAEFQANRYLTEERRQNLARELSLNEAQIKIWFQ.

It belongs to the engrailed homeobox family.

It localises to the nucleus. The sequence is that of Homeobox protein engrailed-like A from Myxine glutinosa (Atlantic hagfish).